A 316-amino-acid chain; its full sequence is Ribosomal protein L11 methyltransferase (316 aa).

Residues T157, G178, D200, and N243 each coordinate S-adenosyl-L-methionine.

This sequence belongs to the methyltransferase superfamily. PrmA family.

The protein resides in the cytoplasm. It catalyses the reaction L-lysyl-[protein] + 3 S-adenosyl-L-methionine = N(6),N(6),N(6)-trimethyl-L-lysyl-[protein] + 3 S-adenosyl-L-homocysteine + 3 H(+). Its function is as follows. Methylates ribosomal protein L11. This chain is Ribosomal protein L11 methyltransferase, found in Streptococcus pneumoniae (strain JJA).